Here is a 419-residue protein sequence, read N- to C-terminus: Gamma-glutamyl phosphate reductase (419 aa).

Belongs to the gamma-glutamyl phosphate reductase family.

It localises to the cytoplasm. The catalysed reaction is L-glutamate 5-semialdehyde + phosphate + NADP(+) = L-glutamyl 5-phosphate + NADPH + H(+). Its pathway is amino-acid biosynthesis; L-proline biosynthesis; L-glutamate 5-semialdehyde from L-glutamate: step 2/2. Catalyzes the NADPH-dependent reduction of L-glutamate 5-phosphate into L-glutamate 5-semialdehyde and phosphate. The product spontaneously undergoes cyclization to form 1-pyrroline-5-carboxylate. This is Gamma-glutamyl phosphate reductase from Bordetella avium (strain 197N).